The primary structure comprises 461 residues: MSHIRSRFSKPADELVVRYTTSLPFDWRLYKEDIKCSTAHARMLSKQGIISAEDSQSIINGLNTILTEIETGSFVFKPETEDIHMAIEGRLFELIGEAAGRLHTARSRNDQVATDVHLFVKNACDETINKIRTLQGALLEQAEAHPQTALPGYTHMQIAQPVLLPHHLLAYFEMLERDCGRFTDARKRADVMPLGSGALAGVPYPLDREMVAKELGFSAISQNSLDAVSERDFILEYLSDAAICQMHLSRLSEEMVIWSSAEYAFVELDDAYTTGSSIMPQKKNPDVAELCRGKTGRVYGSLNTMLTVMKGLPLSYNRDLQEDKEPLFDCVDTLGDSLEVFAGMIKTAKFKPERMLRALEKGYVLATDIADYLVGKGESFRNSHGIVARLVSYAVAQNKTFGELSLAEYRQFSNLFEKDIYAVDIKSALNARNLPGGTAPKQIAQAIARAKKILAEAGVKN.

It belongs to the lyase 1 family. Argininosuccinate lyase subfamily.

Its subcellular location is the cytoplasm. The enzyme catalyses 2-(N(omega)-L-arginino)succinate = fumarate + L-arginine. The protein operates within amino-acid biosynthesis; L-arginine biosynthesis; L-arginine from L-ornithine and carbamoyl phosphate: step 3/3. The protein is Argininosuccinate lyase of Dehalococcoides mccartyi (strain CBDB1).